A 122-amino-acid chain; its full sequence is Small ribosomal subunit protein uS13c (122 aa).

The protein belongs to the universal ribosomal protein uS13 family. As to quaternary structure, part of the 30S ribosomal subunit.

The protein localises to the plastid. It is found in the chloroplast. In terms of biological role, located at the top of the head of the 30S subunit, it contacts several helices of the 16S rRNA. This is Small ribosomal subunit protein uS13c from Cyanidium caldarium (Red alga).